The chain runs to 152 residues: UPF0178 protein Bcer98_3021 (152 aa).

It belongs to the UPF0178 family.

This Bacillus cytotoxicus (strain DSM 22905 / CIP 110041 / 391-98 / NVH 391-98) protein is UPF0178 protein Bcer98_3021.